We begin with the raw amino-acid sequence, 334 residues long: Phosphate acyltransferase (334 aa).

This sequence belongs to the PlsX family. As to quaternary structure, homodimer. Probably interacts with PlsY.

It localises to the cytoplasm. It carries out the reaction a fatty acyl-[ACP] + phosphate = an acyl phosphate + holo-[ACP]. It functions in the pathway lipid metabolism; phospholipid metabolism. In terms of biological role, catalyzes the reversible formation of acyl-phosphate (acyl-PO(4)) from acyl-[acyl-carrier-protein] (acyl-ACP). This enzyme utilizes acyl-ACP as fatty acyl donor, but not acyl-CoA. The polypeptide is Phosphate acyltransferase (Streptococcus thermophilus (strain CNRZ 1066)).